The sequence spans 420 residues: Coiled-coil domain-containing protein 85C (420 aa).

Alanine 2 carries the N-acetylalanine modification. 2 coiled-coil regions span residues 26–92 (ELLR…RELC) and 122–165 (HEVA…LAAA). The interval 165–271 (AGGAGGGGGG…NGLHDPSSTY (107 aa)) is disordered. The segment covering 166 to 176 (GGAGGGGGGAG) has biased composition (gly residues). A Phosphoserine modification is found at serine 179. A compositionally biased stretch (low complexity) spans 185-212 (ASLSGPLAGSAAGSGARDVGDGSSTSSA). The residue at position 247 (serine 247) is a Phosphoserine.

This sequence belongs to the CCDC85 family. In terms of assembly, may interact with ARVCF, CTNND1, CTNND2 and PKP4. As to expression, predominantly expressed on the surface of the lateral ventricular walls of the developing cerebral cortex.

The protein localises to the cell junction. The protein resides in the tight junction. It is found in the adherens junction. In terms of biological role, may play a role in cell-cell adhesion and epithelium development through its interaction with proteins of the beta-catenin family. May play an important role in cortical development, especially in the maintenance of radial glia. The chain is Coiled-coil domain-containing protein 85C (Ccdc85c) from Mus musculus (Mouse).